A 148-amino-acid polypeptide reads, in one-letter code: MNLTKLLPAFAAAVVLSACAKDAPEMTKSSAQIAEMQTLPTITDKTVVYSCNKQTVTAVYQFENQEPVAAMVSVGDGIIAKDFTRDKSQNDFTSFVSGDYVWNVDSGLTLDKFDSVVPVNLIQKGKSSDNIIVKNCDVNVKATKKANL.

The first 20 residues, 1-20 (MNLTKLLPAFAAAVVLSACA), serve as a signal peptide directing secretion.

This is an uncharacterized protein from Haemophilus influenzae (strain ATCC 51907 / DSM 11121 / KW20 / Rd).